A 277-amino-acid polypeptide reads, in one-letter code: Shikimate dehydrogenase (NADP(+)) (277 aa).

Shikimate-binding positions include 15–17 and Thr62; that span reads SLS. Lys66 acts as the Proton acceptor in catalysis. Shikimate-binding residues include Asn87 and Asp102. NADP(+) contacts are provided by residues 127–131, 151–156, and Ile219; these read GAGGA and NRTVDK. Residue Tyr221 participates in shikimate binding. Residue Gly242 participates in NADP(+) binding.

Belongs to the shikimate dehydrogenase family. As to quaternary structure, homodimer.

The enzyme catalyses shikimate + NADP(+) = 3-dehydroshikimate + NADPH + H(+). It participates in metabolic intermediate biosynthesis; chorismate biosynthesis; chorismate from D-erythrose 4-phosphate and phosphoenolpyruvate: step 4/7. Involved in the biosynthesis of the chorismate, which leads to the biosynthesis of aromatic amino acids. Catalyzes the reversible NADPH linked reduction of 3-dehydroshikimate (DHSA) to yield shikimate (SA). The protein is Shikimate dehydrogenase (NADP(+)) of Bacillus cereus (strain ZK / E33L).